Here is a 434-residue protein sequence, read N- to C-terminus: Glutamine synthetase leaf isozyme, chloroplastic (434 aa).

Disordered regions lie at residues M1 to P33 and T101 to P126. Residues M1–A54 constitute a chloroplast transit peptide. A compositionally biased stretch (gly residues) spans A10–Q25. Residues I81–G161 form the GS beta-grasp domain. The GS catalytic domain occupies K168–V434.

This sequence belongs to the glutamine synthetase family. Homooctamer.

The protein resides in the plastid. The protein localises to the chloroplast. It catalyses the reaction L-glutamate + NH4(+) + ATP = L-glutamine + ADP + phosphate + H(+). In terms of biological role, the light-modulated chloroplast enzyme, encoded by a nuclear gene and expressed primarily in leaves, is responsible for the reassimilation of the ammonia generated by photorespiration. This Hordeum vulgare (Barley) protein is Glutamine synthetase leaf isozyme, chloroplastic.